A 240-amino-acid chain; its full sequence is Poxin (240 aa).

The active-site Proton donor is the H46. Y181 acts as the Shared with catalytic histidine of dimeric partner in catalysis. K185 functions as the Proton acceptor; shared with catalytic histidine of dimeric partner in the catalytic mechanism.

It belongs to the poxin family. Homodimer.

The enzyme catalyses 2',3'-cGAMP + H2O = Gp(2'-5')Ap(3') + H(+). In terms of biological role, nuclease that cleaves host 2',3'-cGAMP. The chain is Poxin (P26) from Lepidoptera (butterflies and moths).